We begin with the raw amino-acid sequence, 488 residues long: Ribulose bisphosphate carboxylase large chain 2 (488 aa).

2 residues coordinate substrate: Asn-128 and Thr-178. Lys-180 (proton acceptor) is an active-site residue. Residue Lys-182 coordinates substrate. Mg(2+) contacts are provided by Lys-206, Asp-208, and Glu-209. An N6-carboxylysine modification is found at Lys-206. The active-site Proton acceptor is His-298. Arg-299, His-331, and Ser-383 together coordinate substrate.

It belongs to the RuBisCO large chain family. Type I subfamily. Heterohexadecamer of 8 large chains and 8 small chains. Mg(2+) serves as cofactor.

It carries out the reaction 2 (2R)-3-phosphoglycerate + 2 H(+) = D-ribulose 1,5-bisphosphate + CO2 + H2O. The catalysed reaction is D-ribulose 1,5-bisphosphate + O2 = 2-phosphoglycolate + (2R)-3-phosphoglycerate + 2 H(+). RuBisCO catalyzes two reactions: the carboxylation of D-ribulose 1,5-bisphosphate, the primary event in carbon dioxide fixation, as well as the oxidative fragmentation of the pentose substrate. Both reactions occur simultaneously and in competition at the same active site. The protein is Ribulose bisphosphate carboxylase large chain 2 of Nitrobacter hamburgensis (strain DSM 10229 / NCIMB 13809 / X14).